The following is a 363-amino-acid chain: Pyrimidine monooxygenase RutA (363 aa).

Residues 49–50, N115, E124, 140–141, and S190 each bind FMN; these read IK and RY.

It belongs to the NtaA/SnaA/DszA monooxygenase family. RutA subfamily.

The enzyme catalyses uracil + FMNH2 + NADH + O2 = (Z)-3-ureidoacrylate + FMN + NAD(+) + H2O + H(+). It carries out the reaction thymine + FMNH2 + NADH + O2 = (Z)-2-methylureidoacrylate + FMN + NAD(+) + H2O + H(+). In terms of biological role, catalyzes the pyrimidine ring opening between N-3 and C-4 by an unusual flavin hydroperoxide-catalyzed mechanism, adding oxygen atoms in the process to yield ureidoacrylate peracid, that immediately reacts with FMN forming ureidoacrylate and FMN-N(5)-oxide. The FMN-N(5)-oxide reacts spontaneously with NADH to produce FMN. Requires the flavin reductase RutF to regenerate FMN in vivo. This is Pyrimidine monooxygenase RutA from Escherichia coli O44:H18 (strain 042 / EAEC).